The chain runs to 43 residues: Hemolysin H1U (43 aa).

Met-1 carries the post-translational modification N-formylmethionine.

It belongs to the staphylococcal hemolytic protein family.

The protein localises to the secreted. In terms of biological role, virulence factor. Causes hemolysis of erythrocytes. Acts synergistically with beta-hemolysins from S.aureus ATCC 25923. Cytotoxic towards human dermal fibroblasts. The polypeptide is Hemolysin H1U (Staphylococcus ureilyticus (Staphylococcus cohnii subsp. urealyticus)).